The chain runs to 333 residues: Ketol-acid reductoisomerase (NADP(+)) (333 aa).

In terms of domain architecture, KARI N-terminal Rossmann spans 2 to 182 (ANIYYDDSCD…GGGRAGILET (181 aa)). NADP(+) is bound by residues 25 to 28 (YGSQ), arginine 48, serine 51, serine 53, and 83 to 86 (DTIQ). Residue histidine 108 is part of the active site. Glycine 134 serves as a coordination point for NADP(+). Residues 183–331 (SFREETETDL…TKLRSMMKWL (149 aa)) enclose the KARI C-terminal knotted domain. Residues aspartate 191, glutamate 195, glutamate 227, and glutamate 231 each contribute to the Mg(2+) site. Serine 252 serves as a coordination point for substrate.

This sequence belongs to the ketol-acid reductoisomerase family. The cofactor is Mg(2+).

It catalyses the reaction (2R)-2,3-dihydroxy-3-methylbutanoate + NADP(+) = (2S)-2-acetolactate + NADPH + H(+). The catalysed reaction is (2R,3R)-2,3-dihydroxy-3-methylpentanoate + NADP(+) = (S)-2-ethyl-2-hydroxy-3-oxobutanoate + NADPH + H(+). It participates in amino-acid biosynthesis; L-isoleucine biosynthesis; L-isoleucine from 2-oxobutanoate: step 2/4. It functions in the pathway amino-acid biosynthesis; L-valine biosynthesis; L-valine from pyruvate: step 2/4. In terms of biological role, involved in the biosynthesis of branched-chain amino acids (BCAA). Catalyzes an alkyl-migration followed by a ketol-acid reduction of (S)-2-acetolactate (S2AL) to yield (R)-2,3-dihydroxy-isovalerate. In the isomerase reaction, S2AL is rearranged via a Mg-dependent methyl migration to produce 3-hydroxy-3-methyl-2-ketobutyrate (HMKB). In the reductase reaction, this 2-ketoacid undergoes a metal-dependent reduction by NADPH to yield (R)-2,3-dihydroxy-isovalerate. In Leptospira biflexa serovar Patoc (strain Patoc 1 / Ames), this protein is Ketol-acid reductoisomerase (NADP(+)).